Consider the following 1086-residue polypeptide: DNA polymerase delta catalytic subunit (1086 aa).

The disordered stretch occupies residues 1–64; it reads MTDRSSNEGV…KTSSFEDELA (64 aa). Over residues 29–58 the composition is skewed to basic and acidic residues; it reads EITDVKRRRLSERNGYGDKKGSSSKEKTSS. Zn(2+) is bound by residues Cys993, Cys996, Cys1008, and Cys1011. The CysA-type zinc-finger motif lies at 993–1011; it reads CLGCKAPIKKGKTALCENC. [4Fe-4S] cluster-binding residues include Cys1040, Cys1043, Cys1053, and Cys1058. Residues 1040-1058 carry the CysB motif motif; the sequence is CQRCQGSMHQDVICTSRDC.

Belongs to the DNA polymerase type-B family. Heterotetramer that consist of the pol3, cdc1, cdc27 and cdm1 subunits. The pol3 subunit contains the polymerase active site and most likely the active site for the 3'-5' exonuclease activity. It depends on [4Fe-4S] cluster as a cofactor.

It localises to the nucleus. The catalysed reaction is DNA(n) + a 2'-deoxyribonucleoside 5'-triphosphate = DNA(n+1) + diphosphate. In terms of biological role, catalytic component of DNA polymerase delta (DNA polymerase III) which participates in chromosomal DNA replication. Required during synthesis of the lagging DNA strands at the replication fork, binds at/or near replication origins and moves along DNA with the replication fork. Participates in leading strand synthesis during replication initiation and termination. Has 3'-5' proofreading exonuclease activity that corrects errors arising during DNA replication. The polypeptide is DNA polymerase delta catalytic subunit (pol3) (Schizosaccharomyces pombe (strain 972 / ATCC 24843) (Fission yeast)).